Reading from the N-terminus, the 1456-residue chain is Ig-like and fibronectin type-III domain-containing protein C27B7.7 (1456 aa).

An N-terminal signal peptide occupies residues 1 to 16 (MISLSLVLLLLFGVRC). Fibronectin type-III domains are found at residues 24 to 128 (NDDS…SINT) and 132 to 227 (IPKA…TNST). N-linked (GlcNAc...) asparagine glycans are attached at residues asparagine 64, asparagine 146, asparagine 164, asparagine 198, and asparagine 225. The region spanning 236–322 (PDEEYTADPQ…DAGDSSKEVN (87 aa)) is the Ig-like 1 domain. A disulfide bridge connects residues cysteine 254 and cysteine 308. Positions 328–426 (PGSPPSEITL…VAMERDTQPI (99 aa)) constitute a Fibronectin type-III 3 domain. Residues asparagine 471, asparagine 497, and asparagine 517 are each glycosylated (N-linked (GlcNAc...) asparagine). 3 consecutive Fibronectin type-III domains span residues 531–631 (APTQ…TLNG), 636–736 (PPDN…TAYS), and 737–846 (EVPI…WFRT). Residues asparagine 658, asparagine 691, and asparagine 692 are each glycosylated (N-linked (GlcNAc...) asparagine). An Ig-like 2 domain is found at 841 to 948 (PRWFRTGHGK…GSSSASVEIR (108 aa)). An intrachain disulfide couples cysteine 877 to cysteine 932. Asparagine 893, asparagine 898, asparagine 969, asparagine 1091, asparagine 1120, asparagine 1133, asparagine 1151, asparagine 1207, asparagine 1268, asparagine 1277, asparagine 1298, asparagine 1350, asparagine 1357, and asparagine 1382 each carry an N-linked (GlcNAc...) asparagine glycan. The Fibronectin type-III 7 domain occupies 955–1050 (PPENIILTAY…SCISDVLYET (96 aa)). 3 Fibronectin type-III domains span residues 1148–1234 (APTN…TPNG), 1236–1343 (PKTA…ISFD), and 1347–1438 (VIDN…SSPS). A disordered region spans residues 1419-1456 (LGRESPPSEEIDLEFISSPSPTPIISGSRRKVIKEPPL). Over residues 1434-1445 (ISSPSPTPIISG) the composition is skewed to low complexity.

The protein localises to the secreted. The sequence is that of Ig-like and fibronectin type-III domain-containing protein C27B7.7 from Caenorhabditis elegans.